The primary structure comprises 368 residues: uncharacterized protein (368 aa).

The protein belongs to the YCR102c/YLR460c/YNL134c family.

This is an uncharacterized protein from Saccharomyces cerevisiae (strain ATCC 204508 / S288c) (Baker's yeast).